The following is a 440-amino-acid chain: Transposon Ty1-LR2 Gag polyprotein (440 aa).

Composition is skewed to polar residues over residues 1 to 23 (MESQ…SVTS), 48 to 60 (TKAN…TPAS), and 127 to 152 (QSQF…GNTF). Disordered regions lie at residues 1 to 93 (MESQ…MMTQ), 126 to 174 (PQSQ…PPPM), and 352 to 440 (GSRN…PGTY). Low complexity predominate over residues 153–165 (TDSSSADSDMTST). The interval 299–401 (NNGIHINNKV…NSKSKTARAH (103 aa)) is RNA-binding. Over residues 402–418 (NVSTSNNSPSTDNDSIS) the composition is skewed to low complexity. Ser-416 carries the phosphoserine modification. Positions 419–428 (KSTTEPIQLN) are enriched in polar residues. Over residues 429–440 (NKHDLHLRPGTY) the composition is skewed to basic and acidic residues.

As to quaternary structure, homotrimer.

The protein localises to the cytoplasm. Functionally, capsid protein (CA) is the structural component of the virus-like particle (VLP), forming the shell that encapsulates the retrotransposons dimeric RNA genome. The particles are assembled from trimer-clustered units and there are holes in the capsid shells that allow for the diffusion of macromolecules. CA also has nucleocapsid-like chaperone activity, promoting primer tRNA(i)-Met annealing to the multipartite primer-binding site (PBS), dimerization of Ty1 RNA and initiation of reverse transcription. This Saccharomyces cerevisiae (strain ATCC 204508 / S288c) (Baker's yeast) protein is Transposon Ty1-LR2 Gag polyprotein (TY1A-LR2).